Here is a 123-residue protein sequence, read N- to C-terminus: MAHYEEVNVRGYDEFCQAVSERKGKDIFAYFSGDKDASGKSWCPDCVTAEPIVRGQMSHLPEGSVFIYCQVGERAYWKDSTNAFKKTLKLSGVPTLLRYGTPQKLVEEECFKADLVRMMFTED.

The 83-residue stretch at 41 to 123 folds into the Thioredoxin domain; that stretch reads SWCPDCVTAE…DLVRMMFTED (83 aa). Residues C43 and C46 each act as nucleophile in the active site. C43 and C46 are joined by a disulfide.

This sequence belongs to the thioredoxin family. As to expression, predominantly expressed in liver, brain and muscle. Also expressed in kidney, intestine, skin, stomach, gill and head kidney.

The protein localises to the cytoplasm. Its function is as follows. Disulfide reductase. May participate in various redox reactions through the reversible oxidation of its active center dithiol to a disulfide and catalyze dithiol-disulfide exchange reactions. Has peroxidase activity and may contribute to the elimination of cellular hydrogen peroxide. May function as an antioxidant involved in response to viral infection. The protein is Thioredoxin domain-containing protein 17 of Epinephelus coioides (Orange-spotted grouper).